Reading from the N-terminus, the 495-residue chain is Zinc finger and SCAN domain-containing protein 5B (495 aa).

Residues 1 to 40 form a disordered region; sequence MAANWTLSWGQGGPCNSPGSDTPRSVASPETQLGNHDRNP. Positions 17–34 are enriched in polar residues; the sequence is SPGSDTPRSVASPETQLG. The SCAN box domain occupies 44 to 126; it reads HMNFRMFSCP…DLLRNNRRPK (83 aa). 2 disordered regions span residues 150–183 and 227–347; these read APAS…RREQ and ENRE…PDGQ. A compositionally biased stretch (polar residues) spans 161–173; the sequence is VSSQWASSVNQMH. Residues 250–262 are compositionally biased toward basic and acidic residues; the sequence is RAKEGKEPQKRAS. A compositionally biased stretch (polar residues) spans 292–310; it reads NLSSPKRSKPDASSISQEE. 5 consecutive C2H2-type zinc fingers follow at residues 355 to 377, 383 to 405, 411 to 433, 439 to 461, and 467 to 489; these read FACD…RRSH, FQCD…QRVH, YMCD…KRIH, FKCK…QRTH, and YKCP…LKTH.

It localises to the nucleus. Its function is as follows. May be involved in transcriptional regulation. The protein is Zinc finger and SCAN domain-containing protein 5B (ZSCAN5B) of Homo sapiens (Human).